The following is a 232-amino-acid chain: Thiamine import ATP-binding protein ThiQ (232 aa).

The ABC transporter domain maps to 2–230 (LKLTDITWLY…KASASAILGI (229 aa)). 32-39 (GPSGAGKS) is an ATP binding site.

It belongs to the ABC transporter superfamily. Thiamine importer (TC 3.A.1.19.1) family. The complex is composed of two ATP-binding proteins (ThiQ), two transmembrane proteins (ThiP) and a solute-binding protein (ThiB).

It localises to the cell inner membrane. The catalysed reaction is thiamine(out) + ATP + H2O = thiamine(in) + ADP + phosphate + H(+). Part of the ABC transporter complex ThiBPQ involved in thiamine import. Responsible for energy coupling to the transport system. The chain is Thiamine import ATP-binding protein ThiQ from Shigella flexneri serotype 5b (strain 8401).